A 379-amino-acid chain; its full sequence is MDKTIWIKADKGHWEAHKDRITTGLESGANCVLVNSDEVEKVRELGDIQVAAFTYDDKSGADIVVVGKGGEGDGTKPLSPDPVGSLDMITAIRLKEKGLTVGAYVVIQNKKYEEFAAEIGKECDFLIIVGTDWKVIPLENLIAALQDSDVKIIAGVRDQDEAKLALETMEHGSEGVLLDSDDPNTIKATVAVAERSGIEDLKLVPGKVTKVEAVGMGDRVCVDTCNMMTKGEGMLVGSQASGMFLVHSESEESPYVASRPFRVNAGAVHAYVKVGDRTRYLSELSSGDEVTIVNAGGKQRTGIVGRVKIERRPLMLVEAEVNGEIIKNILQNAETIKLVDINGEPISVADLKPGNEVMVYYEGGARHFGMKVEETIIEK.

It belongs to the archaeal-type DHQ synthase family.

It catalyses the reaction 2-amino-2,3,7-trideoxy-D-lyxo-hept-6-ulosonate + NAD(+) + H2O = 3-dehydroquinate + NH4(+) + NADH + H(+). In terms of biological role, catalyzes the oxidative deamination and cyclization of 2-amino-3,7-dideoxy-D-threo-hept-6-ulosonic acid (ADH) to yield 3-dehydroquinate (DHQ), which is fed into the canonical shikimic pathway of aromatic amino acid biosynthesis. This chain is 3-dehydroquinate synthase, found in Methanococcoides burtonii (strain DSM 6242 / NBRC 107633 / OCM 468 / ACE-M).